Reading from the N-terminus, the 375-residue chain is Alcohol dehydrogenase 1C (375 aa).

Ser-2 carries the N-acetylserine modification. Ser-23 carries the phosphoserine modification. Zn(2+)-binding residues include Cys-47, His-68, Cys-98, Cys-101, Cys-104, Cys-112, and Cys-175. Residues 200 to 205 (GLGGVG), Asp-224, Lys-229, Ile-270, 293 to 295 (VGV), 318 to 320 (AIF), and Arg-370 each bind NAD(+).

The protein belongs to the zinc-containing alcohol dehydrogenase family. In terms of assembly, dimer of identical or non-identical chains of class I alcohol dehydrogenase: ADH1A, ADH1B, and ADH1C. Zn(2+) serves as cofactor.

The protein localises to the cytoplasm. The enzyme catalyses a primary alcohol + NAD(+) = an aldehyde + NADH + H(+). It carries out the reaction ethanol + NAD(+) = acetaldehyde + NADH + H(+). Functionally, alcohol dehydrogenase. Exhibits high activity for ethanol oxidation and plays a major role in ethanol catabolism. This Homo sapiens (Human) protein is Alcohol dehydrogenase 1C (ADH1C).